A 1502-amino-acid polypeptide reads, in one-letter code: G patch domain-containing protein 8 (1502 aa).

The 47-residue stretch at serine 40–methionine 86 folds into the G-patch domain. A coiled-coil region spans residues aspartate 89–alanine 124. A C2H2-type zinc finger spans residues phenylalanine 136–histidine 160. The tract at residues arginine 172–serine 251 is disordered. The segment covering serine 182–alanine 206 has biased composition (basic and acidic residues). Residues valine 223 to aspartate 233 show a composition bias toward acidic residues. Lysine 311 is covalently cross-linked (Glycyl lysine isopeptide (Lys-Gly) (interchain with G-Cter in SUMO2)). Composition is skewed to basic and acidic residues over residues alanine 323–serine 339 and asparagine 424–lysine 436. 2 disordered regions span residues alanine 323–proline 391 and glutamine 419–leucine 541. The span at serine 459 to glutamate 472 shows a compositional bias: polar residues. An N6-acetyllysine modification is found at lysine 479. Serine 491 bears the Phosphoserine mark. Positions serine 491–alanine 519 are enriched in polar residues. A Glycyl lysine isopeptide (Lys-Gly) (interchain with G-Cter in SUMO2) cross-link involves residue lysine 577. Composition is skewed to basic and acidic residues over residues serine 579–valine 623 and serine 653–glycine 670. The segment at serine 579–serine 1301 is disordered. Serine 653 is modified (phosphoserine). Residues lysine 671 to lysine 692 are compositionally biased toward basic residues. Basic and acidic residues predominate over residues alanine 693 to lysine 707. The span at serine 708–lysine 720 shows a compositional bias: basic residues. Over residues proline 733–proline 743 the composition is skewed to pro residues. Phosphoserine is present on residues serine 738, serine 740, and serine 758. Over residues alanine 750–glycine 772 the composition is skewed to basic and acidic residues. Basic residues-rich tracts occupy residues alanine 799–histidine 809 and serine 852–arginine 867. Positions arginine 868–aspartate 896 are enriched in low complexity. Phosphoserine occurs at positions 911 and 914. Over residues serine 919–tyrosine 928 the composition is skewed to basic residues. Residues serine 981, serine 1009, serine 1014, serine 1033, and serine 1035 each carry the phosphoserine modification. Positions tryptophan 1010–arginine 1027 are enriched in basic and acidic residues. A compositionally biased stretch (basic and acidic residues) spans glycine 1042–lysine 1059. Serine 1081 carries the post-translational modification Phosphoserine. Basic and acidic residues-rich tracts occupy residues leucine 1093–valine 1108 and lysine 1159–glutamate 1171. A Glycyl lysine isopeptide (Lys-Gly) (interchain with G-Cter in SUMO2) cross-link involves residue lysine 1105. Position 1107 is a phosphoserine (serine 1107). Serine 1175 carries the phosphoserine modification.

The chain is G patch domain-containing protein 8 (GPATCH8) from Homo sapiens (Human).